The sequence spans 277 residues: Putative phosphoenolpyruvate synthase regulatory protein (277 aa).

157 to 164 (GVSRCGKT) is an ADP binding site.

It belongs to the pyruvate, phosphate/water dikinase regulatory protein family. PSRP subfamily.

The enzyme catalyses [pyruvate, water dikinase] + ADP = [pyruvate, water dikinase]-phosphate + AMP + H(+). It carries out the reaction [pyruvate, water dikinase]-phosphate + phosphate + H(+) = [pyruvate, water dikinase] + diphosphate. Its function is as follows. Bifunctional serine/threonine kinase and phosphorylase involved in the regulation of the phosphoenolpyruvate synthase (PEPS) by catalyzing its phosphorylation/dephosphorylation. The protein is Putative phosphoenolpyruvate synthase regulatory protein of Klebsiella pneumoniae (strain 342).